Here is a 207-residue protein sequence, read N- to C-terminus: MADILTQLQTCLDQLATQFYATIGYLSTYHDNSPAIPHPDVPDAAPALAKIPKNSTAPPVPAGAPVPAQSQASPPAQNPAHGAAGAGTSVGEGGQTPGPAAGAGADPNLPAPDSPRTFASRQRELARDLIIKEQQIEYLISVLPGIDSSEAEQEKRIRELEGELRRVEEERELKMRELKRLRRTLENVLRAVETGLYGDRELLERYS.

The disordered stretch occupies residues 37–121 (PHPDVPDAAP…PDSPRTFASR (85 aa)). A compositionally biased stretch (low complexity) spans 65 to 80 (PVPAQSQASPPAQNPA). Residues 84–96 (AGAGTSVGEGGQT) are compositionally biased toward gly residues. The segment covering 97-108 (PGPAAGAGADPN) has biased composition (low complexity). A coiled-coil region spans residues 146–196 (IDSSEAEQEKRIRELEGELRRVEEERELKMRELKRLRRTLENVLRAVETGL).

The protein belongs to the Mediator complex subunit 21 family. Component of the Mediator complex.

It localises to the nucleus. Functionally, component of the Mediator complex, a coactivator involved in the regulated transcription of nearly all RNA polymerase II-dependent genes. Mediator functions as a bridge to convey information from gene-specific regulatory proteins to the basal RNA polymerase II transcription machinery. Mediator is recruited to promoters by direct interactions with regulatory proteins and serves as a scaffold for the assembly of a functional preinitiation complex with RNA polymerase II and the general transcription factors. This is Mediator of RNA polymerase II transcription subunit 21 (srb7) from Neosartorya fischeri (strain ATCC 1020 / DSM 3700 / CBS 544.65 / FGSC A1164 / JCM 1740 / NRRL 181 / WB 181) (Aspergillus fischerianus).